Here is a 327-residue protein sequence, read N- to C-terminus: GMP reductase (327 aa).

Cys-175 serves as the catalytic Thioimidate intermediate. 204–227 serves as a coordination point for NADP(+); sequence IIADGGIRTHGDIAKSVRFGASMV.

It belongs to the IMPDH/GMPR family. GuaC type 2 subfamily.

The enzyme catalyses IMP + NH4(+) + NADP(+) = GMP + NADPH + 2 H(+). Its function is as follows. Catalyzes the irreversible NADPH-dependent deamination of GMP to IMP. It functions in the conversion of nucleobase, nucleoside and nucleotide derivatives of G to A nucleotides, and in maintaining the intracellular balance of A and G nucleotides. This is GMP reductase from Lysinibacillus sphaericus (strain C3-41).